Consider the following 488-residue polypeptide: Glycogen synthase (488 aa).

Arginine 20 contacts ADP-alpha-D-glucose.

This sequence belongs to the glycosyltransferase 1 family. Bacterial/plant glycogen synthase subfamily.

The enzyme catalyses [(1-&gt;4)-alpha-D-glucosyl](n) + ADP-alpha-D-glucose = [(1-&gt;4)-alpha-D-glucosyl](n+1) + ADP + H(+). It functions in the pathway glycan biosynthesis; glycogen biosynthesis. In terms of biological role, synthesizes alpha-1,4-glucan chains using ADP-glucose. The chain is Glycogen synthase from Chlorobaculum parvum (strain DSM 263 / NCIMB 8327) (Chlorobium vibrioforme subsp. thiosulfatophilum).